Here is a 421-residue protein sequence, read N- to C-terminus: 4-hydroxy-3-methylbut-2-en-1-yl diphosphate synthase (flavodoxin) (421 aa).

Cys298, Cys301, Cys344, and Glu351 together coordinate [4Fe-4S] cluster.

The protein belongs to the IspG family. [4Fe-4S] cluster serves as cofactor.

The enzyme catalyses (2E)-4-hydroxy-3-methylbut-2-enyl diphosphate + oxidized [flavodoxin] + H2O + 2 H(+) = 2-C-methyl-D-erythritol 2,4-cyclic diphosphate + reduced [flavodoxin]. The protein operates within isoprenoid biosynthesis; isopentenyl diphosphate biosynthesis via DXP pathway; isopentenyl diphosphate from 1-deoxy-D-xylulose 5-phosphate: step 5/6. Functionally, converts 2C-methyl-D-erythritol 2,4-cyclodiphosphate (ME-2,4cPP) into 1-hydroxy-2-methyl-2-(E)-butenyl 4-diphosphate. The sequence is that of 4-hydroxy-3-methylbut-2-en-1-yl diphosphate synthase (flavodoxin) from Neisseria meningitidis serogroup C / serotype 2a (strain ATCC 700532 / DSM 15464 / FAM18).